Here is a 535-residue protein sequence, read N- to C-terminus: MKDYTLSELLNRRLALLGERNNLSLLEQCLHGIERECLRVTATAELAQTPHPQALGAALTNGQVTTDYSESLLEFITPALKNPAETIDSLDKIHRFAYSKLGDELLWSPSMPCPLPDEEHTPIAYYGTSNIGKLKYVYRKGLALRYGKTMQCIAGIHYNFSLPEDAWALLKQTEDFAGDARDYQSHSYIALIRNFRRYSWLLMYLFGASPALDAGFLRGRKHQLEQHFDADTLYLPYATSLRMSDLGYQSDAQADLTPCYNDLVSYTDSLRKAVATPYKPYVDVGTHDQNGEWVQLNTNVLQIENEYYSNIRPKRATYSGERPIQALVARGVQYVEVRCLDINPFLPTGISLEQSRFIDAFVLYCALEESQQLASHECSNASSNFLAVVKEGRRPGLSLQRNNSPVDLKTWATELLEKITPIARLLDQAQGIDEHIKSIAVQQAKIDDASLTPSAQVLASMKAHNEGFTAFSLRQSQAHAEYFRTHPLSAQEQADFEAQAKTSIEEQAELEATEEVVDFDTFVGSYQASILSISN.

The protein belongs to the glutamate--cysteine ligase type 1 family. Type 1 subfamily.

It carries out the reaction L-cysteine + L-glutamate + ATP = gamma-L-glutamyl-L-cysteine + ADP + phosphate + H(+). It functions in the pathway sulfur metabolism; glutathione biosynthesis; glutathione from L-cysteine and L-glutamate: step 1/2. In Pseudomonas savastanoi pv. phaseolicola (strain 1448A / Race 6) (Pseudomonas syringae pv. phaseolicola (strain 1448A / Race 6)), this protein is Glutamate--cysteine ligase.